The chain runs to 98 residues: Small ribosomal subunit protein bS16 (98 aa).

It belongs to the bacterial ribosomal protein bS16 family.

The sequence is that of Small ribosomal subunit protein bS16 from Pseudothermotoga lettingae (strain ATCC BAA-301 / DSM 14385 / NBRC 107922 / TMO) (Thermotoga lettingae).